Reading from the N-terminus, the 21-residue chain is NVCHGSDSVESANKEIDLWFK.

Catalysis depends on H4, which acts as the Pros-phosphohistidine intermediate.

Belongs to the NDK family. In terms of assembly, homohexamer. Mg(2+) serves as cofactor.

It is found in the cytoplasm. It catalyses the reaction a 2'-deoxyribonucleoside 5'-diphosphate + ATP = a 2'-deoxyribonucleoside 5'-triphosphate + ADP. The enzyme catalyses a ribonucleoside 5'-diphosphate + ATP = a ribonucleoside 5'-triphosphate + ADP. Its function is as follows. Major role in the synthesis of nucleoside triphosphates other than ATP. The ATP gamma phosphate is transferred to the NDP beta phosphate via a ping-pong mechanism, using a phosphorylated active-site intermediate. The chain is Nucleoside diphosphate kinase (NDK1) from Candida albicans (Yeast).